Consider the following 413-residue polypeptide: uncharacterized protein (413 aa).

An N-terminal signal peptide occupies residues 1 to 22 (MKKSKASALLWLFSLVGFMLHA).

Its subcellular location is the periplasm. In terms of biological role, may be involved in ulvan degradation. Ulvan is the main polysaccharide component of the Ulvales (green seaweed) cell wall. It is composed of disaccharide building blocks comprising 3-sulfated rhamnose (Rha3S) linked to D-glucuronic acid (GlcA), L-iduronic acid (IduA), or D-xylose (Xyl). This is an uncharacterized protein from Formosa agariphila (strain DSM 15362 / KCTC 12365 / LMG 23005 / KMM 3901 / M-2Alg 35-1).